A 330-amino-acid chain; its full sequence is Aspartate--ammonia ligase (330 aa).

Belongs to the class-II aminoacyl-tRNA synthetase family. AsnA subfamily.

The protein localises to the cytoplasm. The enzyme catalyses L-aspartate + NH4(+) + ATP = L-asparagine + AMP + diphosphate + H(+). The protein operates within amino-acid biosynthesis; L-asparagine biosynthesis; L-asparagine from L-aspartate (ammonia route): step 1/1. In Haemophilus influenzae (strain PittGG), this protein is Aspartate--ammonia ligase.